We begin with the raw amino-acid sequence, 160 residues long: Transcription elongation factor GreA (160 aa).

It belongs to the GreA/GreB family.

Its function is as follows. Necessary for efficient RNA polymerase transcription elongation past template-encoded arresting sites. The arresting sites in DNA have the property of trapping a certain fraction of elongating RNA polymerases that pass through, resulting in locked ternary complexes. Cleavage of the nascent transcript by cleavage factors such as GreA or GreB allows the resumption of elongation from the new 3'terminus. GreA releases sequences of 2 to 3 nucleotides. This Francisella philomiragia subsp. philomiragia (strain ATCC 25017 / CCUG 19701 / FSC 153 / O#319-036) protein is Transcription elongation factor GreA.